The chain runs to 156 residues: Small ribosomal subunit protein uS7 (156 aa).

The protein belongs to the universal ribosomal protein uS7 family. As to quaternary structure, part of the 30S ribosomal subunit. Contacts proteins S9 and S11.

Its function is as follows. One of the primary rRNA binding proteins, it binds directly to 16S rRNA where it nucleates assembly of the head domain of the 30S subunit. Is located at the subunit interface close to the decoding center, probably blocks exit of the E-site tRNA. The protein is Small ribosomal subunit protein uS7 of Pseudomonas entomophila (strain L48).